A 60-amino-acid polypeptide reads, in one-letter code: UPF0434 protein NMC0623 (60 aa).

Belongs to the UPF0434 family.

This Neisseria meningitidis serogroup C / serotype 2a (strain ATCC 700532 / DSM 15464 / FAM18) protein is UPF0434 protein NMC0623.